The chain runs to 360 residues: N6-Methyl-AMP deaminase (360 aa).

Positions 23 and 25 each coordinate Zn(2+). N(6)-methyl-AMP-binding positions include His-25, Asn-27, His-73, 105–108, Asp-147, and Gly-180; that span reads STPR. His-207 contributes to the Zn(2+) binding site. N(6)-methyl-AMP contacts are provided by Glu-210, Asp-292, and Asp-293. Glu-210 (proton donor) is an active-site residue. Zn(2+) is bound at residue Asp-292.

Belongs to the metallo-dependent hydrolases superfamily. Adenosine and AMP deaminases family. As to quaternary structure, monomer. Zn(2+) serves as cofactor.

The enzyme catalyses N(6)-methyl-AMP + H2O + H(+) = IMP + methylamine. Functionally, catalyzes the hydrolysis of the free cytosolic methylated adenosine nucleotide N(6)-methyl-AMP (N6-mAMP) to produce inositol monophosphate (IMP) and methylamine. Is required for the catabolism of cytosolic N6-mAMP, which is derived from the degradation of mRNA containing N6-methylated adenine (m6A). In Mus musculus (Mouse), this protein is N6-Methyl-AMP deaminase (Mapda).